The sequence spans 1462 residues: MGQIFSRSASPIPRPPRGLAAHHWLNFLQAAYRLEPGPSSYDFHQLKKFLKIALETPARICPINYSLLASLLPKGYPGRVNEILHILIQTQAQIPSRPAPPPPSSPTHDPPDSDPQIPPPYVEPTAPQVLPVMHPHGAPPNHRPWQMKDLQAIKQEVSQAAPGSPQFMQTIRLAVQQFDPTAKDLQDLLQYLCSSLVASLHHQQLDSLISEAETRGITGYNPLAGPLRVQANNPQQQGLRREYQQLWLAAFAALPGSAKDPSWASILQGLEEPYHAFVERLNIALDNGLPEGTPKDPILRSLAYSNANKECQKLLQARGHTNSPLGDMLRACQTWTPKDKTKVLVVQPKKPPPNQPCFRCGKAGHWSRDCTQPRPPPGPCPLCQDPTHWKRDCPRLKPTIPEPEPEEDALLLDLPADIPHPKNLHRGGGLTSPPTLQQVLPNQDPASILPVIPLDPARRPVIKAQVDTQTSHPKTIEALLDTGADMTVLPIALFSSNTPLKNTSVLGAGGQTQDHFKLTSLPVLIRLPFRTTPIVLTSCLVDTKNNWAIIGRDALQQCQGVLYLPEAKRPPVILPIQAPAVLGLEHLPRPPQISQFPLNPERLQALQHLVRKALEAGHIEPYTGPGNNPVFPVKKANGTWRFIHDLRATNSLTIDLSSSSPGPPDLSSLPTTLAHLQTIDLRDAFFQIPLPKQFQPYFAFTVPQQCNYGPGTRYAWKVLPQGFKNSPTLFEMQLAHILQPIRQAFPQCTILQYMDDILLASPSHEDLLLLSEATMASLISHGLPVSENKTQQTPGTIKFLGQIISPNHLTYDAVPTVPIRSRWALPELQALLGEIQWVSKGTPTLRQPLHSLYCALQRHTDPRDQIYLNPSQVQSLVQLRQALSQNCRSRLVQTLPLLGAIMLTLTGTTTVVFQSKEQWPLVWLHAPLPHTSQCPWGQLLASAVLLLDKYTLQSYGLLCQTIHHNISTQTFNQFIQTSDHPSVPILLHHSHRFKNLGAQTGELWNTFLKTAAPLAPVKALMPVFTLSPVIINTAPCLFSDGSTSRAAYILWDKQILSQRSFPLPPPHKSAQRAELLGLLHGLSSARSWRCLNIFLDSKYLYHYLRTLALGTFQGRSSQAPFQALLPRLLSRKVVYLHHVRSHTNLPDPISRLNALTDALLITPVLQLSPAELHSFTHCGQTALTLQGATTTEASNILRSCHACRGGNPQHQMPRGHIRRGLLPNHIWQGDITHFKYKNTLYRLHVWVDTFSGAISATQKRKETSSEAISSLLQAIAHLGKPSYINTDNGPAYISQDFLNMCTSLAIRHTTHVPYNPTSSGLVERSNGILKTLLYKYFTDKPDLPMDNALSIALWTINHLNVLTNCHKTRWQLHHSPRLQPIPETRSLSNKQTHWYYFKLPGLNSRQWKGPQEALQEAAGAALIPVSASSAQWIPWRLLKRAACPRPVGGPADPKEKDLQHHG.

The N-myristoyl glycine; by host moiety is linked to residue Gly2. The disordered stretch occupies residues 93-144; that stretch reads QIPSRPAPPPPSSPTHDPPDSDPQIPPPYVEPTAPQVLPVMHPHGAPPNHRP. The residue at position 105 (Ser105) is a Phosphoserine; by host MAPK1. The short motif at 118–121 is the PPXY motif element; it reads PPPY. The PTAP/PSAP motif motif lies at 124–127; it reads PTAP. CCHC-type zinc fingers lie at residues 355-372 and 378-395; these read QPCFRCGKAGHWSRDCTQ and GPCPLCQDPTHWKRDCPR. The Peptidase A2 domain occupies 476–554; the sequence is IEALLDTGAD…NNWAIIGRDA (79 aa). The active-site For protease activity; shared with dimeric partner is the Asp481. In terms of domain architecture, Reverse transcriptase spans 614-804; that stretch reads LEAGHIEPYT…GTIKFLGQII (191 aa). Residues Asp680, Asp755, Asp756, Asp1040, Glu1074, Asp1096, Asp1157, Asp1230, and Asp1287 each coordinate Mg(2+). Residues 1031-1165 form the RNase H type-1 domain; that stretch reads INTAPCLFSD…TDALLITPVL (135 aa). An Integrase catalytic domain is found at 1219-1388; it reads RGLLPNHIWQ…QPIPETRSLS (170 aa). The integrase-type DNA-binding region spans 1393 to 1443; that stretch reads HWYYFKLPGLNSRQWKGPQEALQEAAGAALIPVSASSAQWIPWRLLKRAAC.

In terms of assembly, homodimer; the homodimers are part of the immature particles. Interacts with human TSG101 and NEDD4; these interactions are essential for budding and release of viral particles. Homodimer; further assembles as homohexamers. Requires Mg(2+) as cofactor. Post-translationally, phosphorylation of the matrix protein p19 by MAPK1 seems to play a role in budding. Myristoylated. Myristoylation of the matrix (MA) domain mediates the transport and binding of Gag polyproteins to the host plasma membrane and is required for the assembly of viral particles. In terms of processing, specific enzymatic cleavages by the viral protease yield mature proteins. The polyprotein is cleaved during and after budding, this process is termed maturation. The protease is autoproteolytically processed at its N- and C-termini.

The protein resides in the virion. It catalyses the reaction Endonucleolytic cleavage to 5'-phosphomonoester.. The catalysed reaction is DNA(n) + a 2'-deoxyribonucleoside 5'-triphosphate = DNA(n+1) + diphosphate. In terms of biological role, the matrix domain targets Gag, Gag-Pro and Gag-Pro-Pol polyproteins to the plasma membrane via a multipartite membrane binding signal, that includes its myristoylated N-terminus. Its function is as follows. Matrix protein. Forms the spherical core of the virus that encapsulates the genomic RNA-nucleocapsid complex. Functionally, binds strongly to viral nucleic acids and promote their aggregation. Also destabilizes the nucleic acids duplexes via highly structured zinc-binding motifs. In terms of biological role, the aspartyl protease mediates proteolytic cleavages of Gag and Gag-Pol polyproteins during or shortly after the release of the virion from the plasma membrane. Cleavages take place as an ordered, step-wise cascade to yield mature proteins. This process is called maturation. Displays maximal activity during the budding process just prior to particle release from the cell. Cleaves the translation initiation factor eIF4G leading to the inhibition of host cap-dependent translation. Its function is as follows. RT is a multifunctional enzyme that converts the viral RNA genome into dsDNA in the cytoplasm, shortly after virus entry into the cell. This enzyme displays a DNA polymerase activity that can copy either DNA or RNA templates, and a ribonuclease H (RNase H) activity that cleaves the RNA strand of RNA-DNA heteroduplexes in a partially processive 3' to 5'-endonucleasic mode. Conversion of viral genomic RNA into dsDNA requires many steps. A tRNA-Pro binds to the primer-binding site (PBS) situated at the 5'-end of the viral RNA. RT uses the 3' end of the tRNA primer to perform a short round of RNA-dependent minus-strand DNA synthesis. The reading proceeds through the U5 region and ends after the repeated (R) region which is present at both ends of viral RNA. The portion of the RNA-DNA heteroduplex is digested by the RNase H, resulting in a ssDNA product attached to the tRNA primer. This ssDNA/tRNA hybridizes with the identical R region situated at the 3' end of viral RNA. This template exchange, known as minus-strand DNA strong stop transfer, can be either intra- or intermolecular. RT uses the 3' end of this newly synthesized short ssDNA to perform the RNA-dependent minus-strand DNA synthesis of the whole template. RNase H digests the RNA template except for a polypurine tract (PPT) situated at the 5' end of the genome. It is not clear if both polymerase and RNase H activities are simultaneous. RNase H probably can proceed both in a polymerase-dependent (RNA cut into small fragments by the same RT performing DNA synthesis) and a polymerase-independent mode (cleavage of remaining RNA fragments by free RTs). Secondly, RT performs DNA-directed plus-strand DNA synthesis using the PPT that has not been removed by RNase H as primer. PPT and tRNA primers are then removed by RNase H. The 3' and 5' ssDNA PBS regions hybridize to form a circular dsDNA intermediate. Strand displacement synthesis by RT to the PBS and PPT ends produces a blunt ended, linear dsDNA copy of the viral genome that includes long terminal repeats (LTRs) at both ends. Catalyzes viral DNA integration into the host chromosome, by performing a series of DNA cutting and joining reactions. This chain is Gag-Pro-Pol polyprotein (gag-pro-pol), found in Homo sapiens (Human).